A 180-amino-acid polypeptide reads, in one-letter code: Transcriptional repressor NrdR (180 aa).

A zinc finger spans residues 3 to 34 (CPRCSKQEIRVLESRSAEGGQSVRRRRECMSC). The ATP-cone domain occupies 49 to 139 (IMVIKRDGSR…VYRQFQGIKD (91 aa)). The disordered stretch occupies residues 155–180 (LERLLQDSSASDSESSGSPDLVGEYS). Over residues 160 to 174 (QDSSASDSESSGSPD) the composition is skewed to low complexity.

The protein belongs to the NrdR family. Zn(2+) serves as cofactor.

Functionally, negatively regulates transcription of bacterial ribonucleotide reductase nrd genes and operons by binding to NrdR-boxes. In Synechococcus sp. (strain JA-2-3B'a(2-13)) (Cyanobacteria bacterium Yellowstone B-Prime), this protein is Transcriptional repressor NrdR.